The chain runs to 40 residues: Cell division inhibitor MciZ (40 aa).

As to quaternary structure, interacts with FtsZ. Binds to the C-terminal polymerization interface of FtsZ. Binds to FtsZ filaments.

With respect to regulation, highly effective in inhibiting polymerization at low and intermediate concentrations of GTP and only partially effective at high GTP concentrations. Its function is as follows. Blocks Z-ring formation in the mother cell during sporulation by inhibiting the polymerization of FtsZ. Binds to the minus end of FtsZ and functions as a filament-capping protein. At high concentrations, is capable of both capping and sequestration of FtsZ. Decreases the GTPase activity of FtsZ. In Bacillus subtilis (strain 168), this protein is Cell division inhibitor MciZ.